The following is a 127-amino-acid chain: Large-conductance mechanosensitive channel (127 aa).

3 helical membrane-spanning segments follow: residues 9–29, 32–52, and 75–95; these read EFAM…GVAF, IVTA…LGGI, and VIDF…INLL.

It belongs to the MscL family. In terms of assembly, homopentamer.

The protein localises to the cell inner membrane. Channel that opens in response to stretch forces in the membrane lipid bilayer. May participate in the regulation of osmotic pressure changes within the cell. The polypeptide is Large-conductance mechanosensitive channel (Legionella pneumophila subsp. pneumophila (strain Philadelphia 1 / ATCC 33152 / DSM 7513)).